The primary structure comprises 454 residues: tRNA modification GTPase MnmE (454 aa).

(6S)-5-formyl-5,6,7,8-tetrahydrofolate contacts are provided by R23, E80, and K120. The 162-residue stretch at G216–G377 folds into the TrmE-type G domain. Residue N226 participates in K(+) binding. GTP is bound by residues N226–S231, T245–T251, D270–G273, N335–D338, and S358–R360. Position 230 (S230) interacts with Mg(2+). K(+) is bound by residues T245, I247, and T250. T251 provides a ligand contact to Mg(2+). K454 contacts (6S)-5-formyl-5,6,7,8-tetrahydrofolate.

This sequence belongs to the TRAFAC class TrmE-Era-EngA-EngB-Septin-like GTPase superfamily. TrmE GTPase family. In terms of assembly, homodimer. Heterotetramer of two MnmE and two MnmG subunits. The cofactor is K(+).

It localises to the cytoplasm. Exhibits a very high intrinsic GTPase hydrolysis rate. Involved in the addition of a carboxymethylaminomethyl (cmnm) group at the wobble position (U34) of certain tRNAs, forming tRNA-cmnm(5)s(2)U34. The polypeptide is tRNA modification GTPase MnmE (Escherichia coli O7:K1 (strain IAI39 / ExPEC)).